Here is a 259-residue protein sequence, read N- to C-terminus: Probable ABC transporter permease protein RP096 (259 aa).

Transmembrane regions (helical) follow at residues 13-35 (TIKFAQSVGIFSLFSFIAISSII), 49-69 (LFIGFHSLPVVAMTTFFSGAV), 148-168 (VIAAIITMPCLVLIGDIIGVM), 195-215 (PIDVISGLIKATVFGFIISII), and 237-257 (AVVNSSILILISNYLITELFF).

This sequence belongs to the MlaE permease family.

The protein localises to the cell inner membrane. Could be part of an ABC transporter complex. The protein is Probable ABC transporter permease protein RP096 of Rickettsia prowazekii (strain Madrid E).